Here is a 272-residue protein sequence, read N- to C-terminus: 2-succinyl-6-hydroxy-2,4-cyclohexadiene-1-carboxylate synthase (272 aa).

It belongs to the AB hydrolase superfamily. MenH family. As to quaternary structure, monomer.

The enzyme catalyses 5-enolpyruvoyl-6-hydroxy-2-succinyl-cyclohex-3-ene-1-carboxylate = (1R,6R)-6-hydroxy-2-succinyl-cyclohexa-2,4-diene-1-carboxylate + pyruvate. The protein operates within quinol/quinone metabolism; 1,4-dihydroxy-2-naphthoate biosynthesis; 1,4-dihydroxy-2-naphthoate from chorismate: step 3/7. Its pathway is quinol/quinone metabolism; menaquinone biosynthesis. In terms of biological role, catalyzes a proton abstraction reaction that results in 2,5-elimination of pyruvate from 2-succinyl-5-enolpyruvyl-6-hydroxy-3-cyclohexene-1-carboxylate (SEPHCHC) and the formation of 2-succinyl-6-hydroxy-2,4-cyclohexadiene-1-carboxylate (SHCHC). This chain is 2-succinyl-6-hydroxy-2,4-cyclohexadiene-1-carboxylate synthase, found in Yersinia pseudotuberculosis serotype I (strain IP32953).